The chain runs to 440 residues: Glutamate--tRNA ligase 2 (440 aa).

The 'HIGH' region motif lies at 8–18 (PSPTGYLHVGN). Positions 239–243 (ALSKR) match the 'KMSKS' region motif. K242 provides a ligand contact to ATP.

The protein belongs to the class-I aminoacyl-tRNA synthetase family. Glutamate--tRNA ligase type 1 subfamily. In terms of assembly, monomer.

It is found in the cytoplasm. It catalyses the reaction tRNA(Glu) + L-glutamate + ATP = L-glutamyl-tRNA(Glu) + AMP + diphosphate. Functionally, catalyzes the attachment of glutamate to tRNA(Glu) in a two-step reaction: glutamate is first activated by ATP to form Glu-AMP and then transferred to the acceptor end of tRNA(Glu). This is Glutamate--tRNA ligase 2 from Dinoroseobacter shibae (strain DSM 16493 / NCIMB 14021 / DFL 12).